The primary structure comprises 139 residues: Two-component response regulator 24 (139 aa).

A Response regulatory domain is found at 19–134 (TALVVDDSFV…KLLSILHKLN (116 aa)). The residue at position 69 (Asp69) is a 4-aspartylphosphate.

This sequence belongs to the ARR family. Type-A subfamily. In terms of processing, two-component system major event consists of a His-to-Asp phosphorelay between a sensor histidine kinase (HK) and a response regulator (RR). In plants, the His-to-Asp phosphorelay involves an additional intermediate named Histidine-containing phosphotransfer protein (HPt). This multistep phosphorelay consists of a His-Asp-His-Asp sequential transfer of a phosphate group between first a His and an Asp of the HK protein, followed by the transfer to a conserved His of the HPt protein and finally the transfer to an Asp in the receiver domain of the RR protein. In terms of tissue distribution, mostly expressed in flowers and siliques, primarily restricted to pollen grains.

It localises to the nucleus. Its function is as follows. Functions as a response regulator involved in His-to-Asp phosphorelay signal transduction system. Phosphorylation of the Asp residue in the receiver domain activates the ability of the protein to promote the transcription of target genes. Type-A response regulators seem to act as negative regulators of the cytokinin signaling. This chain is Two-component response regulator 24, found in Arabidopsis thaliana (Mouse-ear cress).